Consider the following 160-residue polypeptide: MESPEGAGPGEIVKDVKVPQAALNVSAHETGDMCRTPVAEEEEEVGIPIPAPGFLQVTERRQPLSSVSSLEVHFDLLDLTELTDMSDQELAEVFADSDDENLATESPAGLHPLSRASCLRSPSWTKTRAEQNREKQPPSDPERQGTIVDTFLTVEEPKED.

Phosphoserine occurs at positions 3, 97, and 121. Positions 95–160 are disordered; the sequence is ADSDDENLAT…FLTVEEPKED (66 aa). Positions 127 to 143 are enriched in basic and acidic residues; the sequence is TRAEQNREKQPPSDPER.

The protein belongs to the dysbindin family.

The polypeptide is Dysbindin domain-containing protein 1 (Dbndd1) (Mus musculus (Mouse)).